A 206-amino-acid polypeptide reads, in one-letter code: Peroxynitrite isomerase (206 aa).

Positions 21–27 match the GXWXGXG motif; the sequence is GTWEGNG. Residue H190 participates in heme b binding.

This sequence belongs to the nitrobindin family. In terms of assembly, homodimer. Requires heme b as cofactor.

The enzyme catalyses peroxynitrite = nitrate. It participates in nitrogen metabolism. Heme-binding protein able to scavenge peroxynitrite and to protect free L-tyrosine against peroxynitrite-mediated nitration, by acting as a peroxynitrite isomerase that converts peroxynitrite to nitrate. Therefore, this protein likely plays a role in peroxynitrite sensing and in the detoxification of reactive nitrogen and oxygen species (RNS and ROS, respectively). Is able to bind nitric oxide (NO) in vitro, but may act as a sensor of peroxynitrite levels in vivo. The polypeptide is Peroxynitrite isomerase (Kocuria rhizophila (strain ATCC 9341 / DSM 348 / NBRC 103217 / DC2201)).